The following is a 263-amino-acid chain: uncharacterized protein (263 aa).

Positions 107–246 constitute a DOD-type homing endonuclease domain; that stretch reads ILGVLNGDGS…CCSFLEKLGI (140 aa).

This is an uncharacterized protein from Methanocaldococcus jannaschii (strain ATCC 43067 / DSM 2661 / JAL-1 / JCM 10045 / NBRC 100440) (Methanococcus jannaschii).